Here is a 277-residue protein sequence, read N- to C-terminus: Indole-3-glycerol phosphate synthase (277 aa).

This sequence belongs to the TrpC family.

It carries out the reaction 1-(2-carboxyphenylamino)-1-deoxy-D-ribulose 5-phosphate + H(+) = (1S,2R)-1-C-(indol-3-yl)glycerol 3-phosphate + CO2 + H2O. Its pathway is amino-acid biosynthesis; L-tryptophan biosynthesis; L-tryptophan from chorismate: step 4/5. The polypeptide is Indole-3-glycerol phosphate synthase (Pseudomonas putida (strain GB-1)).